The primary structure comprises 445 residues: MQQGSAPNSAPKISFVSLGCPKALVDSERIITRLRAEGYELARKHDGADVVIVNTCGFLDSAKQESLAAIGSAMAENGKVIVTGCMGAEPEQIEQAYPGVLSITGPQQYESVLDAVHRASPPVHNPHLDLVPPQGIKLTPRHYAYLKISEGCNNRCSFCIIPKLRGDLVSRPAADVLREAERLVAAGVKELLVISQDTSAYGLDIKYAESPWKDRSVRARFLDLARELGELGAWVRLHYVYPYPHVDEVIGLMTDGKVLPYLDIPFQHASPNVLKAMRRPAAQDKTLDRIKAWRGACPDLALRSTFIVGFPGETDEDFAYLLDWLDEAEIDRLGCFKYEPVAGATSNALPGQVPDEVKQERWNALMARQQKISARRLKRKVGTRQQIIIDEVGPTVAKGRSKADAPEIDGAVYLSSRRPLRAGEIVTAKIERADEYDLHGTVAGF.

One can recognise an MTTase N-terminal domain in the interval 11-121 (PKISFVSLGC…VLDAVHRASP (111 aa)). [4Fe-4S] cluster-binding residues include cysteine 20, cysteine 56, cysteine 85, cysteine 152, cysteine 156, and cysteine 159. A Radical SAM core domain is found at 138–375 (LTPRHYAYLK…MARQQKISAR (238 aa)). The TRAM domain maps to 378 to 444 (KRKVGTRQQI…EYDLHGTVAG (67 aa)).

It belongs to the methylthiotransferase family. RimO subfamily. The cofactor is [4Fe-4S] cluster.

The protein resides in the cytoplasm. The catalysed reaction is L-aspartate(89)-[ribosomal protein uS12]-hydrogen + (sulfur carrier)-SH + AH2 + 2 S-adenosyl-L-methionine = 3-methylsulfanyl-L-aspartate(89)-[ribosomal protein uS12]-hydrogen + (sulfur carrier)-H + 5'-deoxyadenosine + L-methionine + A + S-adenosyl-L-homocysteine + 2 H(+). Catalyzes the methylthiolation of an aspartic acid residue of ribosomal protein uS12. The polypeptide is Ribosomal protein uS12 methylthiotransferase RimO (Bradyrhizobium sp. (strain ORS 278)).